Consider the following 139-residue polypeptide: ATP synthase epsilon chain (139 aa).

Belongs to the ATPase epsilon chain family. In terms of assembly, F-type ATPases have 2 components, CF(1) - the catalytic core - and CF(0) - the membrane proton channel. CF(1) has five subunits: alpha(3), beta(3), gamma(1), delta(1), epsilon(1). CF(0) has three main subunits: a, b and c.

The protein resides in the cell inner membrane. Functionally, produces ATP from ADP in the presence of a proton gradient across the membrane. This Pseudomonas putida (strain ATCC 700007 / DSM 6899 / JCM 31910 / BCRC 17059 / LMG 24140 / F1) protein is ATP synthase epsilon chain.